The following is a 250-amino-acid chain: Small ribosomal subunit protein uS2 (250 aa).

Belongs to the universal ribosomal protein uS2 family.

This is Small ribosomal subunit protein uS2 from Marinobacter nauticus (strain ATCC 700491 / DSM 11845 / VT8) (Marinobacter aquaeolei).